A 193-amino-acid chain; its full sequence is Fra a 1-associated protein (193 aa).

The segment at 1–27 (MGWVWKDDDEQGGHVNPSAADISPRLD) is disordered.

Interacts with FRAA1E, FRAA2 and FRAA3.

This Fragaria ananassa (Strawberry) protein is Fra a 1-associated protein.